Reading from the N-terminus, the 522-residue chain is Lysine--tRNA ligase (522 aa).

The short motif at 44 to 52 is the 'HIGH' region element; that stretch reads PSGLPHIGT. The short motif at 290-294 is the 'KMSKS' region element; it reads KISKS. Lys293 provides a ligand contact to ATP.

It belongs to the class-I aminoacyl-tRNA synthetase family.

It localises to the cytoplasm. It catalyses the reaction tRNA(Lys) + L-lysine + ATP = L-lysyl-tRNA(Lys) + AMP + diphosphate. The protein is Lysine--tRNA ligase of Rickettsia rickettsii (strain Iowa).